The primary structure comprises 235 residues: Small ribosomal subunit protein uS2 (235 aa).

This sequence belongs to the universal ribosomal protein uS2 family.

This is Small ribosomal subunit protein uS2 from Synechococcus sp. (strain RCC307).